The chain runs to 137 residues: Urease subunit beta (137 aa).

Residues 118–137 (IIAEENKVSENANKESGYNR) form a disordered region. Residues 126–137 (SENANKESGYNR) show a composition bias toward polar residues.

It belongs to the urease beta subunit family. As to quaternary structure, heterotrimer of UreA (gamma), UreB (beta) and UreC (alpha) subunits. Three heterotrimers associate to form the active enzyme.

It localises to the cytoplasm. It catalyses the reaction urea + 2 H2O + H(+) = hydrogencarbonate + 2 NH4(+). The protein operates within nitrogen metabolism; urea degradation; CO(2) and NH(3) from urea (urease route): step 1/1. The protein is Urease subunit beta of Staphylococcus xylosus.